Here is a 142-residue protein sequence, read N- to C-terminus: Putative pre-16S rRNA nuclease (142 aa).

This sequence belongs to the YqgF nuclease family.

Its subcellular location is the cytoplasm. In terms of biological role, could be a nuclease involved in processing of the 5'-end of pre-16S rRNA. The protein is Putative pre-16S rRNA nuclease of Photobacterium profundum (strain SS9).